Consider the following 256-residue polypeptide: Type III pantothenate kinase (256 aa).

An ATP-binding site is contributed by 6–13; the sequence is DVGNSHIY. Residues Tyr99 and 106–109 each bind substrate; that span reads GADR. The active-site Proton acceptor is Asp108. Asp129 contacts K(+). Position 132 (Thr132) interacts with ATP. Thr184 provides a ligand contact to substrate.

The protein belongs to the type III pantothenate kinase family. As to quaternary structure, homodimer. NH4(+) serves as cofactor. K(+) is required as a cofactor.

Its subcellular location is the cytoplasm. The catalysed reaction is (R)-pantothenate + ATP = (R)-4'-phosphopantothenate + ADP + H(+). It functions in the pathway cofactor biosynthesis; coenzyme A biosynthesis; CoA from (R)-pantothenate: step 1/5. In terms of biological role, catalyzes the phosphorylation of pantothenate (Pan), the first step in CoA biosynthesis. The protein is Type III pantothenate kinase of Legionella pneumophila (strain Corby).